Consider the following 146-residue polypeptide: Villin-like protein ABP41 (146 aa).

This sequence belongs to the villin/gelsolin family. In terms of assembly, binds to actin. Expressed in pollen (at protein level).

The protein localises to the cytoplasm. It localises to the cytoskeleton. Its function is as follows. Ca(2+)-dependent actin filament-severing protein that is required for pollen tube growth. Probably regulates the dynamics of the actin cytoskeleton. It can promote the assembly of monomers into filaments (nucleation) as well as sever filaments already formed. The chain is Villin-like protein ABP41 from Lilium davidii (David's lily).